The chain runs to 326 residues: Beta-ketoacyl-[acyl-carrier-protein] synthase III (326 aa).

Active-site residues include Cys-120 and His-253. The ACP-binding stretch occupies residues 254–258; that stretch reads QANIR. The active site involves Asn-283.

It belongs to the thiolase-like superfamily. FabH family. In terms of assembly, homodimer.

It is found in the cytoplasm. It catalyses the reaction malonyl-[ACP] + acetyl-CoA + H(+) = 3-oxobutanoyl-[ACP] + CO2 + CoA. The protein operates within lipid metabolism; fatty acid biosynthesis. Functionally, catalyzes the condensation reaction of fatty acid synthesis by the addition to an acyl acceptor of two carbons from malonyl-ACP. Catalyzes the first condensation reaction which initiates fatty acid synthesis and may therefore play a role in governing the total rate of fatty acid production. Possesses both acetoacetyl-ACP synthase and acetyl transacylase activities. Its substrate specificity determines the biosynthesis of branched-chain and/or straight-chain of fatty acids. The protein is Beta-ketoacyl-[acyl-carrier-protein] synthase III of Ralstonia pickettii (strain 12J).